The sequence spans 337 residues: Holliday junction branch migration complex subunit RuvB (337 aa).

The tract at residues methionine 1–tyrosine 182 is large ATPase domain (RuvB-L). Residues leucine 21, arginine 22, glycine 63, lysine 66, threonine 67, threonine 68, glutamate 129–tyrosine 131, arginine 172, tyrosine 182, and arginine 219 each bind ATP. Threonine 67 contributes to the Mg(2+) binding site. A small ATPAse domain (RuvB-S) region spans residues lysine 183–glycine 253. The segment at histidine 256–asparagine 337 is head domain (RuvB-H). Positions 311 and 316 each coordinate DNA.

Belongs to the RuvB family. Homohexamer. Forms an RuvA(8)-RuvB(12)-Holliday junction (HJ) complex. HJ DNA is sandwiched between 2 RuvA tetramers; dsDNA enters through RuvA and exits via RuvB. An RuvB hexamer assembles on each DNA strand where it exits the tetramer. Each RuvB hexamer is contacted by two RuvA subunits (via domain III) on 2 adjacent RuvB subunits; this complex drives branch migration. In the full resolvosome a probable DNA-RuvA(4)-RuvB(12)-RuvC(2) complex forms which resolves the HJ.

The protein resides in the cytoplasm. It carries out the reaction ATP + H2O = ADP + phosphate + H(+). In terms of biological role, the RuvA-RuvB-RuvC complex processes Holliday junction (HJ) DNA during genetic recombination and DNA repair, while the RuvA-RuvB complex plays an important role in the rescue of blocked DNA replication forks via replication fork reversal (RFR). RuvA specifically binds to HJ cruciform DNA, conferring on it an open structure. The RuvB hexamer acts as an ATP-dependent pump, pulling dsDNA into and through the RuvAB complex. RuvB forms 2 homohexamers on either side of HJ DNA bound by 1 or 2 RuvA tetramers; 4 subunits per hexamer contact DNA at a time. Coordinated motions by a converter formed by DNA-disengaged RuvB subunits stimulates ATP hydrolysis and nucleotide exchange. Immobilization of the converter enables RuvB to convert the ATP-contained energy into a lever motion, pulling 2 nucleotides of DNA out of the RuvA tetramer per ATP hydrolyzed, thus driving DNA branch migration. The RuvB motors rotate together with the DNA substrate, which together with the progressing nucleotide cycle form the mechanistic basis for DNA recombination by continuous HJ branch migration. Branch migration allows RuvC to scan DNA until it finds its consensus sequence, where it cleaves and resolves cruciform DNA. The sequence is that of Holliday junction branch migration complex subunit RuvB from Acholeplasma laidlawii (strain PG-8A).